A 132-amino-acid polypeptide reads, in one-letter code: Small ribosomal subunit protein uS8 (132 aa).

This sequence belongs to the universal ribosomal protein uS8 family. As to quaternary structure, part of the 30S ribosomal subunit. Contacts proteins S5 and S12.

Functionally, one of the primary rRNA binding proteins, it binds directly to 16S rRNA central domain where it helps coordinate assembly of the platform of the 30S subunit. In Pseudarthrobacter chlorophenolicus (strain ATCC 700700 / DSM 12829 / CIP 107037 / JCM 12360 / KCTC 9906 / NCIMB 13794 / A6) (Arthrobacter chlorophenolicus), this protein is Small ribosomal subunit protein uS8.